Here is a 199-residue protein sequence, read N- to C-terminus: GTP cyclohydrolase 1 (199 aa).

Residues Cys89, His92, and Cys161 each coordinate Zn(2+).

It belongs to the GTP cyclohydrolase I family. As to quaternary structure, toroid-shaped homodecamer, composed of two pentamers of five dimers.

The catalysed reaction is GTP + H2O = 7,8-dihydroneopterin 3'-triphosphate + formate + H(+). The protein operates within cofactor biosynthesis; 7,8-dihydroneopterin triphosphate biosynthesis; 7,8-dihydroneopterin triphosphate from GTP: step 1/1. The chain is GTP cyclohydrolase 1 from Bifidobacterium longum (strain NCC 2705).